The following is a 23-amino-acid chain: Cytochrome c oxidase subunit 7A-liver, mitochondrial (23 aa).

The protein belongs to the cytochrome c oxidase VIIa family. As to quaternary structure, component of the cytochrome c oxidase (complex IV, CIV), a multisubunit enzyme composed of 14 subunits. The complex is composed of a catalytic core of 3 subunits MT-CO1, MT-CO2 and MT-CO3, encoded in the mitochondrial DNA, and 11 supernumerary subunits COX4I, COX5A, COX5B, COX6A, COX6B, COX6C, COX7A, COX7B, COX7C, COX8 and NDUFA4, which are encoded in the nuclear genome. The complex exists as a monomer or a dimer and forms supercomplexes (SCs) in the inner mitochondrial membrane with NADH-ubiquinone oxidoreductase (complex I, CI) and ubiquinol-cytochrome c oxidoreductase (cytochrome b-c1 complex, complex III, CIII), resulting in different assemblies (supercomplex SCI(1)III(2)IV(1) and megacomplex MCI(2)III(2)IV(2)).

It is found in the mitochondrion inner membrane. It functions in the pathway energy metabolism; oxidative phosphorylation. Its function is as follows. Component of the cytochrome c oxidase, the last enzyme in the mitochondrial electron transport chain which drives oxidative phosphorylation. The respiratory chain contains 3 multisubunit complexes succinate dehydrogenase (complex II, CII), ubiquinol-cytochrome c oxidoreductase (cytochrome b-c1 complex, complex III, CIII) and cytochrome c oxidase (complex IV, CIV), that cooperate to transfer electrons derived from NADH and succinate to molecular oxygen, creating an electrochemical gradient over the inner membrane that drives transmembrane transport and the ATP synthase. Cytochrome c oxidase is the component of the respiratory chain that catalyzes the reduction of oxygen to water. Electrons originating from reduced cytochrome c in the intermembrane space (IMS) are transferred via the dinuclear copper A center (CU(A)) of subunit 2 and heme A of subunit 1 to the active site in subunit 1, a binuclear center (BNC) formed by heme A3 and copper B (CU(B)). The BNC reduces molecular oxygen to 2 water molecules using 4 electrons from cytochrome c in the IMS and 4 protons from the mitochondrial matrix. This chain is Cytochrome c oxidase subunit 7A-liver, mitochondrial, found in Oncorhynchus mykiss (Rainbow trout).